Consider the following 61-residue polypeptide: UPF0434 protein PFL_1779 (61 aa).

The protein belongs to the UPF0434 family.

This is UPF0434 protein PFL_1779 from Pseudomonas fluorescens (strain ATCC BAA-477 / NRRL B-23932 / Pf-5).